The primary structure comprises 284 residues: Protein-S-isoprenylcysteine O-methyltransferase (284 aa).

Topologically, residues 1 to 16 (MAGCAARVPPGSEARL) are cytoplasmic. Residues 17 to 33 (SLATFLLGASVLALPLL) traverse the membrane as a helical segment. The Lumenal segment spans residues 34–41 (TRAGLQGR). Residues 42–59 (TGLALYVAGLNALLLLLY) form a helical membrane-spanning segment. Over 60–69 (RPPRYQIAIR) the chain is Cytoplasmic. A helical transmembrane segment spans residues 70-87 (ACFLGFVFGCGVLLSFSQ). At 88–92 (SSWNH) the chain is on the lumenal side. The helical transmembrane segment at 93–112 (FGWYVCSLSLFHYSEYLVTA) threads the bilayer. Residues 113 to 131 (VNNPKSLSLDSFLLNHSLE) lie on the Cytoplasmic side of the membrane. Residues 132-149 (YTVAALSSWIEFTLENIF) form a helical membrane-spanning segment. Topologically, residues 150 to 154 (WPELK) are lumenal. Residues 155-174 (QITWLSAAGLLMVIFGECLR) traverse the membrane as a helical segment. The Cytoplasmic segment spans residues 175 to 212 (KVAMFTAGSNFNHVVQSEKSDTHTLVTSGVYAWCRHPS). S-adenosyl-L-methionine-binding positions include Gln-190, 197–200 (HTLV), Tyr-205, and 210–213 (HPSY). The helical transmembrane segment at 213–228 (YVGWFYWSIGTQVMLC) threads the bilayer. Residue Asn-229 is a topological domain, lumenal. The chain crosses the membrane as a helical span at residues 230 to 244 (PICGVVYALTVWRFF). The Cytoplasmic segment spans residues 245 to 284 (RDRTEEEEISLIHFFGEEYLDYKKRVPTGLPFIKGVKVGL). Arg-247 is a binding site for substrate. Glu-251 lines the S-adenosyl-L-methionine pocket.

This sequence belongs to the class VI-like SAM-binding methyltransferase superfamily. Isoprenylcysteine carboxyl methyltransferase family.

The protein resides in the endoplasmic reticulum membrane. The enzyme catalyses [protein]-C-terminal S-[(2E,6E)-farnesyl]-L-cysteine + S-adenosyl-L-methionine = [protein]-C-terminal S-[(2E,6E)-farnesyl]-L-cysteine methyl ester + S-adenosyl-L-homocysteine. Functionally, catalyzes the post-translational methylation of isoprenylated C-terminal cysteine residues. The sequence is that of Protein-S-isoprenylcysteine O-methyltransferase from Rattus norvegicus (Rat).